A 406-amino-acid chain; its full sequence is UPF0754 membrane protein Cyan7425_4067 (406 aa).

The helical transmembrane segment at 381 to 401 threads the bilayer; it reads IVTLGGVLGLLIGIAQSVLLL.

This sequence belongs to the UPF0754 family.

It is found in the cell inner membrane. This is UPF0754 membrane protein Cyan7425_4067 from Cyanothece sp. (strain PCC 7425 / ATCC 29141).